The chain runs to 218 residues: MNWSDILAEEKQKPYFKKILEFLANEALVGKTIFPTKANIFNAFKYTRLDNLKVVILGQDPYHNYNQAHGLAFSVQQGVDIPPSLRNIYKELERSITEFKIPEHGCLINWAKQGVFLLNTTLTVEAHKANSHKDIGWEIFTDAVIQKISNNKPNVVFMLWGSHARKKKNLIDTAKHLVLESSHPSPLSVYRGFDGCDHFVKANQYLTSKDLDIIDWRL.

Catalysis depends on aspartate 60, which acts as the Proton acceptor.

This sequence belongs to the uracil-DNA glycosylase (UDG) superfamily. UNG family.

The protein localises to the cytoplasm. It catalyses the reaction Hydrolyzes single-stranded DNA or mismatched double-stranded DNA and polynucleotides, releasing free uracil.. Excises uracil residues from the DNA which can arise as a result of misincorporation of dUMP residues by DNA polymerase or due to deamination of cytosine. This is Uracil-DNA glycosylase from Francisella philomiragia subsp. philomiragia (strain ATCC 25017 / CCUG 19701 / FSC 153 / O#319-036).